The following is a 283-amino-acid chain: Bis(5'-nucleosyl)-tetraphosphatase, symmetrical (283 aa).

Belongs to the Ap4A hydrolase family.

It carries out the reaction P(1),P(4)-bis(5'-adenosyl) tetraphosphate + H2O = 2 ADP + 2 H(+). Hydrolyzes diadenosine 5',5'''-P1,P4-tetraphosphate to yield ADP. This Pseudomonas aeruginosa (strain LESB58) protein is Bis(5'-nucleosyl)-tetraphosphatase, symmetrical.